The sequence spans 419 residues: MMFNNENYKDYDQELWEAIQAEEDRQEHNIELIASENMVSKAVMQAQGSVLTNKYAEGYPSKRYYGGTEYVDIVESLAIERAKKLFGAAYANVQPHSGSQANAAAYMALINAGDTVLGMDLAAGGHLTHGSPVNFSGKTYQFVGYTVDKETEKLDYAAILKQAKAVQPKLIVAGASAYSRQIDFEQFRFIADQVGSYLMVDMAHIAGLVAAGLHQNPVPYAHIVTSTTHKTLRGPRGGLLLTNDEAISRKMNAAIFPGLQGGPLEHVIAAKAVAFKEALDPAFTDYARAVIANTAAMAEVFAKDDRFRLISGGTDNHLFLVDVTKVIENGKLAQALLDEVNITLNKNAIPFETLSPFKTSGIRIGCAAITSRGMGVDESRTIAHLIIKALVNHQQPEILEEVRYEVRRLTDAFPLYKKN.

(6S)-5,6,7,8-tetrahydrofolate-binding positions include leucine 121 and glycine 125–leucine 127. Lysine 230 is subject to N6-(pyridoxal phosphate)lysine. Serine 355–phenylalanine 357 is a (6S)-5,6,7,8-tetrahydrofolate binding site.

The protein belongs to the SHMT family. As to quaternary structure, homodimer. The cofactor is pyridoxal 5'-phosphate.

The protein resides in the cytoplasm. The enzyme catalyses (6R)-5,10-methylene-5,6,7,8-tetrahydrofolate + glycine + H2O = (6S)-5,6,7,8-tetrahydrofolate + L-serine. It participates in one-carbon metabolism; tetrahydrofolate interconversion. Its pathway is amino-acid biosynthesis; glycine biosynthesis; glycine from L-serine: step 1/1. In terms of biological role, catalyzes the reversible interconversion of serine and glycine with tetrahydrofolate (THF) serving as the one-carbon carrier. This reaction serves as the major source of one-carbon groups required for the biosynthesis of purines, thymidylate, methionine, and other important biomolecules. Also exhibits THF-independent aldolase activity toward beta-hydroxyamino acids, producing glycine and aldehydes, via a retro-aldol mechanism. This is Serine hydroxymethyltransferase from Streptococcus equi subsp. equi (strain 4047).